A 344-amino-acid polypeptide reads, in one-letter code: Protein BIM1 (344 aa).

Ser2 is modified (N-acetylserine). A Calponin-homology (CH) domain is found at Gly6–Ile107. The segment at Ile126–Arg173 is disordered. Polar residues predominate over residues Ile127–Arg146. Positions Ser147–Gly159 are enriched in low complexity. Ser157 is subject to Phosphoserine. The span at Arg163 to Arg173 shows a compositional bias: polar residues. The region spanning Glu188–Met281 is the EB1 C-terminal domain. The segment at Asn292 to Val312 is disordered.

This sequence belongs to the MAPRE family.

The protein resides in the cytoplasm. The protein localises to the cytoskeleton. Functionally, binds microtubules. The protein is Protein BIM1 (BIM1) of Saccharomyces cerevisiae (strain ATCC 204508 / S288c) (Baker's yeast).